The chain runs to 577 residues: Thiol:disulfide interchange protein DsbD (577 aa).

The signal sequence occupies residues M1 to A23. Intrachain disulfides connect C131–C137 and C194–C316. Transmembrane regions (helical) follow at residues A182–I202, Y225–L245, Y255–Y275, L308–I328, G338–F358, W369–L389, and A396–L416. The region spanning V437–P577 is the Thioredoxin domain. Residues C492 and C495 are joined by a disulfide bond.

It belongs to the thioredoxin family. DsbD subfamily.

Its subcellular location is the cell inner membrane. The catalysed reaction is [protein]-dithiol + NAD(+) = [protein]-disulfide + NADH + H(+). It carries out the reaction [protein]-dithiol + NADP(+) = [protein]-disulfide + NADPH + H(+). Functionally, required to facilitate the formation of correct disulfide bonds in some periplasmic proteins and for the assembly of the periplasmic c-type cytochromes. Acts by transferring electrons from cytoplasmic thioredoxin to the periplasm. This transfer involves a cascade of disulfide bond formation and reduction steps. This Pectobacterium atrosepticum (strain SCRI 1043 / ATCC BAA-672) (Erwinia carotovora subsp. atroseptica) protein is Thiol:disulfide interchange protein DsbD.